A 360-amino-acid polypeptide reads, in one-letter code: Probable nuclear hormone receptor HR38 (360 aa).

The interval 1-21 (GSSSPGVAPADNTGPRAAPSS) is disordered. A DNA-binding region (nuclear receptor) is located at residues 23–98 (SQLCAVCGDT…VGMVKEVVRT (76 aa)). 2 consecutive NR C4-type zinc fingers follow at residues 26–46 (CAVCGDTAACQHYGVRTCEGC) and 62–86 (CLAEKSCPVDKRRRNRCQFCWFQKC). Positions 122–357 (PPISLITALV…PLIENMFRAS (236 aa)) constitute an NR LBD domain.

It belongs to the nuclear hormone receptor family. NR4 subfamily. Forms a heterodimer with USP.

The protein localises to the nucleus. The polypeptide is Probable nuclear hormone receptor HR38 (HR38) (Bombyx mori (Silk moth)).